The following is a 707-amino-acid chain: Matrix metalloproteinase-9 (707 aa).

A signal peptide spans 1–19 (MSLWQPLVLVLLVLGCCFA). The propeptide at 20–93 (APRQRQSTLV…GELDSATLKA (74 aa)) is activation peptide. Asparagine 38 carries N-linked (GlcNAc...) asparagine glycosylation. A Cysteine switch motif is present at residues 97-104 (PRCGVPDL). Cysteine 99 is a binding site for Zn(2+). Residues asparagine 120 and asparagine 127 are each glycosylated (N-linked (GlcNAc...) asparagine). Aspartate 131 and aspartate 165 together coordinate Ca(2+). Histidine 175 and aspartate 177 together coordinate Zn(2+). Ca(2+)-binding residues include aspartate 182, glycine 183, aspartate 185, and leucine 187. Residue histidine 190 participates in Zn(2+) binding. The Ca(2+) site is built by glycine 197, glutamine 199, and aspartate 201. Zn(2+) is bound at residue histidine 203. Positions 205, 206, and 208 each coordinate Ca(2+). 3 Fibronectin type-II domains span residues 225–273 (ADGA…FCPS), 283–331 (ADGK…FCPT), and 342–390 (SAGE…FCPD). Cystine bridges form between cysteine 230–cysteine 256, cysteine 244–cysteine 271, cysteine 288–cysteine 314, cysteine 302–cysteine 329, cysteine 347–cysteine 373, and cysteine 361–cysteine 388. Histidine 401 contacts Zn(2+). Residue glutamate 402 is part of the active site. Zn(2+) is bound by residues histidine 405 and histidine 411. Residues 431–508 (LHKDDVNGIR…AGPSTATTVP (78 aa)) form a disordered region. Pro residues-rich tracts occupy residues 452 to 475 (RPPT…PPTV) and 486 to 499 (TGPP…PPTA). Cysteines 516 and 704 form a disulfide. Hemopexin repeat units lie at residues 518 to 563 (VNIF…WPAL), 564 to 608 (PRKL…GLGA), 610 to 657 (VAQV…FPGV), and 658 to 704 (PLDT…ILQC).

It belongs to the peptidase M10A family. As to quaternary structure, exists as monomer or homodimer; disulfide-linked. Also exists as heterodimer with LCN2. Macrophages and transformed cell lines produce only the monomeric form. Interacts with ECM1. (Microbial infection) Interacts with Staphylococcus aureus protein SSL5; this interaction inhibits MMP9 activity. It depends on Zn(2+) as a cofactor. Requires Ca(2+) as cofactor. In terms of processing, processing of the precursor yields different active forms of 64, 67 and 82 kDa. Sequentially processing by MMP3 yields the 82 kDa matrix metalloproteinase-9. N- and O-glycosylated. In terms of tissue distribution, detected in neutrophils (at protein level). Produced by normal alveolar macrophages and granulocytes.

Its subcellular location is the secreted. It localises to the extracellular space. The protein localises to the extracellular matrix. The enzyme catalyses Cleavage of gelatin types I and V and collagen types IV and V.. With respect to regulation, inhibited by histatin-3 1/24 (histatin-5). Inhibited by ECM1. Matrix metalloproteinase that plays an essential role in local proteolysis of the extracellular matrix and in leukocyte migration. Could play a role in bone osteoclastic resorption. Cleaves KiSS1 at a Gly-|-Leu bond. Cleaves NINJ1 to generate the Secreted ninjurin-1 form. Cleaves type IV and type V collagen into large C-terminal three quarter fragments and shorter N-terminal one quarter fragments. Degrades fibronectin but not laminin or Pz-peptide. The polypeptide is Matrix metalloproteinase-9 (MMP9) (Homo sapiens (Human)).